Here is a 292-residue protein sequence, read N- to C-terminus: Small ribosomal subunit biogenesis GTPase RsgA (292 aa).

Residues 65–223 (KTELIRPTVA…VVDTPGFSSL (159 aa)) form the CP-type G domain. GTP is bound by residues 114–117 (NKLD) and 165–173 (GPSGVGKST). Residues C247, C252, H254, and C260 each coordinate Zn(2+).

This sequence belongs to the TRAFAC class YlqF/YawG GTPase family. RsgA subfamily. As to quaternary structure, monomer. Associates with 30S ribosomal subunit, binds 16S rRNA. It depends on Zn(2+) as a cofactor.

The protein resides in the cytoplasm. One of several proteins that assist in the late maturation steps of the functional core of the 30S ribosomal subunit. Helps release RbfA from mature subunits. May play a role in the assembly of ribosomal proteins into the subunit. Circularly permuted GTPase that catalyzes slow GTP hydrolysis, GTPase activity is stimulated by the 30S ribosomal subunit. The sequence is that of Small ribosomal subunit biogenesis GTPase RsgA from Alkaliphilus metalliredigens (strain QYMF).